Reading from the N-terminus, the 218-residue chain is LexA repressor (218 aa).

A DNA-binding region (H-T-H motif) is located at residues 31–51 (IREIQDGLRISSTSVVAYNLR). Catalysis depends on for autocatalytic cleavage activity residues serine 137 and lysine 176.

This sequence belongs to the peptidase S24 family. Homodimer.

It catalyses the reaction Hydrolysis of Ala-|-Gly bond in repressor LexA.. Functionally, represses a number of genes involved in the response to DNA damage (SOS response), including recA and lexA. In the presence of single-stranded DNA, RecA interacts with LexA causing an autocatalytic cleavage which disrupts the DNA-binding part of LexA, leading to derepression of the SOS regulon and eventually DNA repair. This Roseiflexus sp. (strain RS-1) protein is LexA repressor.